We begin with the raw amino-acid sequence, 381 residues long: Acetyl-CoA:oxalate CoA-transferase (381 aa).

The active site involves His-233.

It belongs to the CoA-transferase III family. In terms of assembly, homodimer.

The enzyme catalyses oxalate + acetyl-CoA = oxalyl-CoA + acetate. Functionally, involved in the catabolism of oxalate and in the adapatation to low pH. ACOCT serves to prime the oxalate-induced acid tolerance response (ATR) cycle by producing substrate for oxalyl-CoA decarboxylase (OXC) and formyl-coenzyme A transferase (FCOCT). Catalyzes the reversible conversion of acetyl-CoA and oxalate to oxalyl-CoA and acetate. It can also use formyl-CoA and oxalate to produce oxalyl-CoA and formate with significantly reduced specific activity. The chain is Acetyl-CoA:oxalate CoA-transferase (yfdE) from Escherichia coli (strain K12).